The chain runs to 289 residues: S-methyl-5'-thioadenosine phosphorylase (289 aa).

Phosphate contacts are provided by residues Ser-24, 66–67 (RH), and 99–100 (TA). Met-202 is a substrate binding site. Phosphate is bound at residue Thr-203. 226 to 228 (DYD) is a substrate binding site.

The protein belongs to the PNP/MTAP phosphorylase family. MTAP subfamily. Homotrimer. As to expression, in embryos, expressed in the fat body and visceral mesoderm.

Its subcellular location is the cytoplasm. The protein localises to the nucleus. The enzyme catalyses S-methyl-5'-thioadenosine + phosphate = 5-(methylsulfanyl)-alpha-D-ribose 1-phosphate + adenine. It functions in the pathway amino-acid biosynthesis; L-methionine biosynthesis via salvage pathway; S-methyl-5-thio-alpha-D-ribose 1-phosphate from S-methyl-5'-thioadenosine (phosphorylase route): step 1/1. Functionally, catalyzes the reversible phosphorylation of S-methyl-5'-thioadenosine (MTA) to adenine and 5-methylthioribose-1-phosphate. Involved in the breakdown of MTA, a major by-product of polyamine biosynthesis. Responsible for the first step in the methionine salvage pathway after MTA has been generated from S-adenosylmethionine. Has broad substrate specificity with 6-aminopurine nucleosides as preferred substrates. This chain is S-methyl-5'-thioadenosine phosphorylase (Mtap), found in Drosophila melanogaster (Fruit fly).